We begin with the raw amino-acid sequence, 159 residues long: MAIININEVMIHLLPGQIIAGLDLGTKTIGIAVSDRGLIFSNPRSVLQRQKFTVDAQTLIKIFDHENVGVIIIGLPLNMNGSSGPRAQATRTFVRNMEAYTEIPFVFWDERLSTIAAERSLLEMDVSRAKRATRIDSAAAAFILQGALNRIHNLHHIEG.

It belongs to the YqgF nuclease family.

The protein resides in the cytoplasm. Its function is as follows. Could be a nuclease involved in processing of the 5'-end of pre-16S rRNA. In Bartonella henselae (strain ATCC 49882 / DSM 28221 / CCUG 30454 / Houston 1) (Rochalimaea henselae), this protein is Putative pre-16S rRNA nuclease.